Consider the following 296-residue polypeptide: NAD kinase (296 aa).

Catalysis depends on Asp-72, which acts as the Proton acceptor. NAD(+) contacts are provided by residues Asp-72–Gly-73, Asn-146–Asp-147, Arg-157, Lys-174, Asp-176, Thr-187–Ser-192, and Gln-247.

Belongs to the NAD kinase family. Requires a divalent metal cation as cofactor.

It is found in the cytoplasm. The catalysed reaction is NAD(+) + ATP = ADP + NADP(+) + H(+). Functionally, involved in the regulation of the intracellular balance of NAD and NADP, and is a key enzyme in the biosynthesis of NADP. Catalyzes specifically the phosphorylation on 2'-hydroxyl of the adenosine moiety of NAD to yield NADP. The chain is NAD kinase from Pseudomonas putida (strain W619).